We begin with the raw amino-acid sequence, 413 residues long: Putative competence-damage inducible protein (413 aa).

Belongs to the CinA family.

The sequence is that of Putative competence-damage inducible protein from Thermoanaerobacter sp. (strain X514).